A 651-amino-acid polypeptide reads, in one-letter code: LysM domain receptor-like kinase 3 (651 aa).

The signal sequence occupies residues 1-19 (MNLTFYIFFLSLLPSFSSS). Residues asparagine 2, asparagine 23, asparagine 42, asparagine 73, asparagine 86, asparagine 100, asparagine 114, and asparagine 177 are each glycosylated (N-linked (GlcNAc...) asparagine). Over 20-236 (KPMNCSDTTR…TAKSGSHVPY (217 aa)) the chain is Extracellular. 3 disulfides stabilise this stretch: cysteine 24-cysteine 76, cysteine 31-cysteine 133, and cysteine 74-cysteine 131. Residues 142-186 (MSYVAMAGDSVQSLSSRFGVSMDRIEDVNGILNLDNITAGDLLYI) form the LysM domain. The interval 196 to 216 (YETSKINPPAPSPAPASSLAN) is disordered. 2 N-linked (GlcNAc...) asparagine glycosylation sites follow: asparagine 218 and asparagine 225. A helical membrane pass occupies residues 237–257 (IWIVGGLGVVLALLVLCILVC). Over 258 to 651 (ICLRSSSCSS…QVFSGLVQGR (394 aa)) the chain is Cytoplasmic. Phosphothreonine is present on threonine 330. One can recognise a Protein kinase domain in the interval 341 to 628 (FSDSNLLGHG…VVISLSQILL (288 aa)). ATP-binding positions include 347 to 355 (LGHGNYGSV) and lysine 368. Tyrosine 410 is subject to Phosphotyrosine. Residue aspartate 464 is the Proton acceptor of the active site. Position 468 is a phosphoserine (serine 468). Phosphothreonine is present on residues threonine 500 and threonine 505. Tyrosine 513 is modified (phosphotyrosine).

The protein belongs to the protein kinase superfamily. Ser/Thr protein kinase family.

The protein localises to the cell membrane. Putative Lysin motif (LysM) receptor kinase that may recognize microbe-derived N-acetylglucosamine (NAG)-containing ligands. The sequence is that of LysM domain receptor-like kinase 3 (LYK3) from Arabidopsis thaliana (Mouse-ear cress).